A 516-amino-acid chain; its full sequence is GMP synthase [glutamine-hydrolyzing] (516 aa).

The region spanning 5–199 is the Glutamine amidotransferase type-1 domain; sequence SIIVLDFGSQ…ARNICGVTEK (195 aa). C82 serves as the catalytic Nucleophile. Active-site residues include H173 and E175. The GMPS ATP-PPase domain occupies 200–391; sequence WKMEHFLKEQ…LGLPESMINR (192 aa). An ATP-binding site is contributed by 227 to 233; it reads SGGVDSS.

As to quaternary structure, homodimer.

The enzyme catalyses XMP + L-glutamine + ATP + H2O = GMP + L-glutamate + AMP + diphosphate + 2 H(+). It participates in purine metabolism; GMP biosynthesis; GMP from XMP (L-Gln route): step 1/1. Catalyzes the synthesis of GMP from XMP. This Sulfurimonas denitrificans (strain ATCC 33889 / DSM 1251) (Thiomicrospira denitrificans (strain ATCC 33889 / DSM 1251)) protein is GMP synthase [glutamine-hydrolyzing].